We begin with the raw amino-acid sequence, 822 residues long: Sushi domain-containing protein 2 (822 aa).

Residues Met-1–Ala-27 form the signal peptide. An SMB domain is found at Gln-28–Leu-66. The Extracellular portion of the chain corresponds to Gln-28–Ala-785. 7 cysteine pairs are disulfide-bonded: Cys-31–Cys-35, Cys-31–Cys-44, Cys-35–Cys-62, Cys-42–Cys-44, Cys-42–Cys-55, Cys-48–Cys-54, and Cys-55–Cys-62. N-linked (GlcNAc...) asparagine glycosylation is found at Asn-162 and Asn-177. One can recognise an AMOP domain in the interval Pro-285–Arg-433. The 195-residue stretch at Arg-445–Leu-639 folds into the VWFD domain. Asn-522 is a glycosylation site (N-linked (GlcNAc...) asparagine). In terms of domain architecture, Sushi spans Val-723–Pro-780. 2 disulfide bridges follow: Cys-725/Cys-765 and Cys-751/Cys-778. The helical transmembrane segment at Val-786–Val-806 threads the bilayer. Residues Leu-807–Pro-822 are Cytoplasmic-facing.

Interacts with LGALS1; leads to an increased amount of LGALS1 on the cell surface. Interacts with GPR15LG; the interaction is direct. As to expression, highly expressed in breast cancer, but shows a restricted expression pattern in normal tissues such as adipose, adrenal gland, kidney, lung, mammary gland, placenta, thyroid, trachea, and uterus. Also expressed in colon; down-regulated in colon cancer tissues.

The protein localises to the cell membrane. Functionally, may be a cytokine receptor for GPR15LG. May be a tumor suppressor; together with GPR15LG has a growth inhibitory effect on colon cancer cells which includes G1 cell cycle arrest. May play a role in breast tumorigenesis. This chain is Sushi domain-containing protein 2 (SUSD2), found in Homo sapiens (Human).